Consider the following 227-residue polypeptide: MFRPLLSFTLARLVSLPLHAQTFRAAKQDLNRLYQDHPVTFYCGCKIEYQGKKMSPDLASCGYEPRKQAKRANRIEWEHVVPAWEFGHQLQCWQQGGRKNCGKTDEFNQMEGDMHNLFPAIGEVNVDRANYRFSDWNGTPHQYGQCQMLVDFKERQVQPPKGLVRGQIARAYLYMSQQYGPGLAAQQRKLFEAWDRQYPADGWECERNRRIGKLQGNTNPFIEKQCQ.

A signal peptide spans 1–20 (MFRPLLSFTLARLVSLPLHA).

It belongs to the EndA/NucM nuclease family.

It localises to the secreted. This is Extracellular deoxyribonuclease from Aeromonas hydrophila.